Consider the following 74-residue polypeptide: Large ribosomal subunit protein bL31 (74 aa).

Zn(2+) is bound by residues Cys-16, Cys-18, Cys-37, and Cys-40.

The protein belongs to the bacterial ribosomal protein bL31 family. Type A subfamily. Part of the 50S ribosomal subunit. Zn(2+) serves as cofactor.

Functionally, binds the 23S rRNA. The sequence is that of Large ribosomal subunit protein bL31 from Koribacter versatilis (strain Ellin345).